The sequence spans 362 residues: 3-dehydroquinate synthase (362 aa).

Residues 71 to 76 (DGEQYK), 105 to 109 (GVIGD), 129 to 130 (TT), K142, K151, and 169 to 172 (CLQT) each bind NAD(+). Residues E184, H247, and H264 each coordinate Zn(2+).

The protein belongs to the sugar phosphate cyclases superfamily. Dehydroquinate synthase family. Co(2+) is required as a cofactor. Requires Zn(2+) as cofactor. NAD(+) serves as cofactor.

The protein resides in the cytoplasm. It carries out the reaction 7-phospho-2-dehydro-3-deoxy-D-arabino-heptonate = 3-dehydroquinate + phosphate. Its pathway is metabolic intermediate biosynthesis; chorismate biosynthesis; chorismate from D-erythrose 4-phosphate and phosphoenolpyruvate: step 2/7. Its function is as follows. Catalyzes the conversion of 3-deoxy-D-arabino-heptulosonate 7-phosphate (DAHP) to dehydroquinate (DHQ). In Cronobacter sakazakii (strain ATCC BAA-894) (Enterobacter sakazakii), this protein is 3-dehydroquinate synthase.